The primary structure comprises 162 residues: Inorganic pyrophosphatase (162 aa).

E8 lines the Mg(2+) pocket. Substrate is bound by residues K16, R30, and Y42. Residues D52, D57, D84, and D89 each coordinate Mg(2+). D89 functions as the Proton acceptor in the catalytic mechanism. Y126 is a binding site for substrate.

The protein belongs to the PPase family. In terms of assembly, homohexamer. The cofactor is Mg(2+).

It is found in the cytoplasm. The enzyme catalyses diphosphate + H2O = 2 phosphate + H(+). Its function is as follows. Catalyzes the hydrolysis of inorganic pyrophosphate (PPi) forming two phosphate ions. This Mycobacterium bovis (strain ATCC BAA-935 / AF2122/97) protein is Inorganic pyrophosphatase.